Consider the following 339-residue polypeptide: Anthranilate phosphoribosyltransferase (339 aa).

5-phospho-alpha-D-ribose 1-diphosphate-binding positions include glycine 80, 83 to 84, threonine 88, 90 to 93, 108 to 116, and serine 120; these read GD, NIST, and KHGNRSVSS. Anthranilate is bound at residue glycine 80. Serine 92 is a Mg(2+) binding site. Asparagine 111 is a binding site for anthranilate. Arginine 166 provides a ligand contact to anthranilate. Positions 225 and 226 each coordinate Mg(2+).

It belongs to the anthranilate phosphoribosyltransferase family. As to quaternary structure, homodimer. Requires Mg(2+) as cofactor.

The enzyme catalyses N-(5-phospho-beta-D-ribosyl)anthranilate + diphosphate = 5-phospho-alpha-D-ribose 1-diphosphate + anthranilate. It functions in the pathway amino-acid biosynthesis; L-tryptophan biosynthesis; L-tryptophan from chorismate: step 2/5. Catalyzes the transfer of the phosphoribosyl group of 5-phosphorylribose-1-pyrophosphate (PRPP) to anthranilate to yield N-(5'-phosphoribosyl)-anthranilate (PRA). The sequence is that of Anthranilate phosphoribosyltransferase from Desulfosudis oleivorans (strain DSM 6200 / JCM 39069 / Hxd3) (Desulfococcus oleovorans).